An 834-amino-acid polypeptide reads, in one-letter code: MTYSNKPTGSSLRSSRNSTLEPQSLVHREESKRQEGPKGQNLRIGLASPEQIRNWAERILPNGEIVGRVLKPHTIHYQTHKPEKDGLFCERIFGPIKSGFCSCGKYKGTRDNDSPPFCEQCGVELTESRVRRHRMGYIQLSSPVTHVWYLKNRPSVISHLLEMPLKDVESLVYCGSFIIGPGTYSKFRLLGTLRIGTHERAYKRILTRKRLRTRKHFLQTKNISLASRSVTLEKSQEKVNDSLKLSQRIIIARKRLLRLAAKPILEPKLICNRFYVPWRIALELFLSKWYRDCESREIITGGYGIQRMLINLNLQNKLVSLQKNWERLVEQTEKMWFPVSGKYKNSDHSADIQREKRLIIRSSKIIRDLIQSKTQPEWMVLSVLPVLPPDLRPIVELREGQLITSDLNELYRKVLFRNEDLSIWLSYQGTLVLSGLLARLQRASLQRAVDALLANGMGSSTFRDYNKRAYKSFSALIKGKKGRFRENLLGKRVDYSGRSVIVVGPLLALHECGLPREMALELFQPFIIRELITRQLAPNLRAAKSMIQNKEPIIWKVLQVIVQNRLVLLNRAPTLHRLGIQAFQPVLVGERAILLHPLVCAGFNADFDGDQMAVHVPLSWEAQVEARILMWSPSNLLSPATGRAVAVPSQDMLLGLYVLTLEGSVGIYGSRQRSFVSSSLLFTKNHEIKESKEEDSQSKQDFIRSLDKKSKPIKNSKYSLYPKFIENKSSFHKFPIFYDYDDVIISIHQGHLNLFSFLWLRWEAKYPVISSRKGPIEYQFDSSGNSINIYDNSYIKKNRKGNSFSKYILTTAGRVLFNQQIQQSIQEHFSSLRK.

Residues 1 to 22 (MTYSNKPTGSSLRSSRNSTLEP) show a composition bias toward polar residues. Residues 1–45 (MTYSNKPTGSSLRSSRNSTLEPQSLVHREESKRQEGPKGQNLRIG) form a disordered region. The span at 26–36 (VHREESKRQEG) shows a compositional bias: basic and acidic residues. Zn(2+) is bound by residues C101, C103, C118, and C121. Residues D606, D608, and D610 each contribute to the Mg(2+) site.

It belongs to the RNA polymerase beta' chain family. RpoC1 subfamily. As to quaternary structure, in plastids the minimal PEP RNA polymerase catalytic core is composed of four subunits: alpha, beta, beta', and beta''. When a (nuclear-encoded) sigma factor is associated with the core the holoenzyme is formed, which can initiate transcription. The cofactor is Mg(2+). It depends on Zn(2+) as a cofactor.

The protein resides in the plastid. It is found in the chloroplast. It catalyses the reaction RNA(n) + a ribonucleoside 5'-triphosphate = RNA(n+1) + diphosphate. Functionally, DNA-dependent RNA polymerase catalyzes the transcription of DNA into RNA using the four ribonucleoside triphosphates as substrates. This is DNA-directed RNA polymerase subunit beta' from Staurastrum punctulatum (Green alga).